Consider the following 360-residue polypeptide: sn-glycerol-3-phosphate import ATP-binding protein UgpC (360 aa).

The ABC transporter domain maps to 4-235 (LSLKGVRKSY…PATTFVASFI (232 aa)). 37 to 44 (GPSGCGKS) contacts ATP.

The protein belongs to the ABC transporter superfamily. sn-glycerol-3-phosphate importer (TC 3.A.1.1.3) family. In terms of assembly, the complex is composed of two ATP-binding proteins (UgpC), two transmembrane proteins (UgpA and UgpE) and a solute-binding protein (UgpB).

The protein resides in the cell inner membrane. It carries out the reaction sn-glycerol 3-phosphate(out) + ATP + H2O = sn-glycerol 3-phosphate(in) + ADP + phosphate + H(+). Functionally, part of the ABC transporter complex UgpBAEC involved in sn-glycerol-3-phosphate (G3P) import. Responsible for energy coupling to the transport system. In Burkholderia pseudomallei (strain 1710b), this protein is sn-glycerol-3-phosphate import ATP-binding protein UgpC.